Here is a 473-residue protein sequence, read N- to C-terminus: Ribulose bisphosphate carboxylase large chain (473 aa).

Substrate-binding residues include Asn116 and Thr166. The active-site Proton acceptor is the Lys168. A substrate-binding site is contributed by Lys170. Residues Lys194, Asp196, and Glu197 each contribute to the Mg(2+) site. An N6-carboxylysine modification is found at Lys194. The active-site Proton acceptor is His287. Arg288, His320, and Ser372 together coordinate substrate.

It belongs to the RuBisCO large chain family. Type I subfamily. In terms of assembly, heterohexadecamer of 8 large chains and 8 small chains. Requires Mg(2+) as cofactor.

It catalyses the reaction 2 (2R)-3-phosphoglycerate + 2 H(+) = D-ribulose 1,5-bisphosphate + CO2 + H2O. The catalysed reaction is D-ribulose 1,5-bisphosphate + O2 = 2-phosphoglycolate + (2R)-3-phosphoglycerate + 2 H(+). Its function is as follows. RuBisCO catalyzes two reactions: the carboxylation of D-ribulose 1,5-bisphosphate, the primary event in carbon dioxide fixation, as well as the oxidative fragmentation of the pentose substrate. Both reactions occur simultaneously and in competition at the same active site. The protein is Ribulose bisphosphate carboxylase large chain of Alkalilimnicola ehrlichii (strain ATCC BAA-1101 / DSM 17681 / MLHE-1).